The primary structure comprises 219 residues: Ribose-5-phosphate isomerase A (219 aa).

Substrate is bound by residues 28–31, 81–84, and 94–97; these read SGST, DGAD, and KGGG. The active-site Proton acceptor is E103. K121 is a substrate binding site.

The protein belongs to the ribose 5-phosphate isomerase family. In terms of assembly, homodimer.

The catalysed reaction is aldehydo-D-ribose 5-phosphate = D-ribulose 5-phosphate. Its pathway is carbohydrate degradation; pentose phosphate pathway; D-ribose 5-phosphate from D-ribulose 5-phosphate (non-oxidative stage): step 1/1. In terms of biological role, catalyzes the reversible conversion of ribose-5-phosphate to ribulose 5-phosphate. In Actinobacillus pleuropneumoniae serotype 5b (strain L20), this protein is Ribose-5-phosphate isomerase A.